The chain runs to 168 residues: Small ribosomal subunit protein uS5 (168 aa).

One can recognise an S5 DRBM domain in the interval 13–76 (LQEKLIAVNR…EKARRNMVTV (64 aa)).

The protein belongs to the universal ribosomal protein uS5 family. As to quaternary structure, part of the 30S ribosomal subunit. Contacts proteins S4 and S8.

With S4 and S12 plays an important role in translational accuracy. Functionally, located at the back of the 30S subunit body where it stabilizes the conformation of the head with respect to the body. The chain is Small ribosomal subunit protein uS5 from Shewanella amazonensis (strain ATCC BAA-1098 / SB2B).